Consider the following 352-residue polypeptide: Ketoisovalerate oxidoreductase subunit VorB (352 aa).

Heterotrimer of the VorA, VorB and VorC subunits.

It catalyses the reaction 3-methyl-2-oxobutanoate + 2 oxidized [2Fe-2S]-[ferredoxin] + CoA = 2-methylpropanoyl-CoA + 2 reduced [2Fe-2S]-[ferredoxin] + CO2 + H(+). This is Ketoisovalerate oxidoreductase subunit VorB (vorB) from Methanothermobacter marburgensis (strain ATCC BAA-927 / DSM 2133 / JCM 14651 / NBRC 100331 / OCM 82 / Marburg) (Methanobacterium thermoautotrophicum).